Here is a 434-residue protein sequence, read N- to C-terminus: MEATTAQANELERRVDLSIAIADVEKEMEQRLKRMGKNMKVPGFRPGKVPFNIVKQQYGDQARHEVLSEELDRVFGETVTEKKMRVAGYPRIEPKTTESNSHLEFSAIFEVYPEFTPGDLSGSEVERPVLEVSAAEVDKTLDILRKQRVSYADADRAAAKEDRVVIDFTGKKDGVPFPGGQANDYPFVLGQGMMLPDFENAVEGAKAGETKTFDLTFPADYHAKDLAGQTVQFDITVKQVQAPVLPELDAEFATSMGIADGDVTKMRAEIEANLKREVKRRIEGKLKDQVMEALLKANPITVPVALVDMEIQRLMQAARQDMEQRGMKVKDMPIQPEWFADQAKRRVTLGLILAEVVKTEKLQASPEQVRTMVEETAQSYEHPEEVIRWYYAQPQRLQEVEGVAIENNVVEWVLSKAKVTEKAAVFDELMGQKQ.

The 86-residue stretch at 161 to 246 (EDRVVIDFTG…VKQVQAPVLP (86 aa)) folds into the PPIase FKBP-type domain.

This sequence belongs to the FKBP-type PPIase family. Tig subfamily.

It is found in the cytoplasm. The catalysed reaction is [protein]-peptidylproline (omega=180) = [protein]-peptidylproline (omega=0). Involved in protein export. Acts as a chaperone by maintaining the newly synthesized protein in an open conformation. Functions as a peptidyl-prolyl cis-trans isomerase. In Dechloromonas aromatica (strain RCB), this protein is Trigger factor.